We begin with the raw amino-acid sequence, 734 residues long: Photosystem I P700 chlorophyll a apoprotein A2 (734 aa).

The next 8 membrane-spanning stretches (helical) occupy residues 46–69 (IFASHFGQLAIIFLWTSGNLFHVA), 135–158 (LYNGSMFLLFIATLALFAGWLHLE), 175–199 (LNHHLSALFGLSSLAWSGHLIHVAI), 273–291 (IAHHHLAIAVLFIVAGHMY), 330–353 (LHFQLGLALASLGVITSLVAQHMY), 369–395 (AALYTHHQYIAGFIMTGAFAHGAIFFI), 417–439 (AIISHLSWVTLFLGFHTLGLYVH), and 517–535 (FLVHHAIALGLHTTTLILV). Positions 559 and 568 each coordinate [4Fe-4S] cluster. 2 helical membrane-spanning segments follow: residues 575–596 (AFYLAVFWMLNTIGWTTFYWHW) and 643–665 (LAVWGWMFLFGHLVWATGFMFLI). Positions 654, 662, and 670 each coordinate chlorophyll a. Tryptophan 671 serves as a coordination point for phylloquinone. The helical transmembrane segment at 707–727 (LVGLAHFSVGYVFTYAAFLIA) threads the bilayer.

This sequence belongs to the PsaA/PsaB family. The PsaA/B heterodimer binds the P700 chlorophyll special pair and subsequent electron acceptors. PSI consists of a core antenna complex that captures photons, and an electron transfer chain that converts photonic excitation into a charge separation. The eukaryotic PSI reaction center is composed of at least 11 subunits. The cofactor is P700 is a chlorophyll a/chlorophyll a' dimer, A0 is one or more chlorophyll a, A1 is one or both phylloquinones and FX is a shared 4Fe-4S iron-sulfur center..

Its subcellular location is the plastid. The protein localises to the chloroplast thylakoid membrane. It carries out the reaction reduced [plastocyanin] + hnu + oxidized [2Fe-2S]-[ferredoxin] = oxidized [plastocyanin] + reduced [2Fe-2S]-[ferredoxin]. Its function is as follows. PsaA and PsaB bind P700, the primary electron donor of photosystem I (PSI), as well as the electron acceptors A0, A1 and FX. PSI is a plastocyanin/cytochrome c6-ferredoxin oxidoreductase, converting photonic excitation into a charge separation, which transfers an electron from the donor P700 chlorophyll pair to the spectroscopically characterized acceptors A0, A1, FX, FA and FB in turn. Oxidized P700 is reduced on the lumenal side of the thylakoid membrane by plastocyanin or cytochrome c6. The protein is Photosystem I P700 chlorophyll a apoprotein A2 of Euglena gracilis.